A 175-amino-acid chain; its full sequence is uncharacterized protein (175 aa).

Transmembrane regions (helical) follow at residues 25–45, 46–66, 97–117, 124–144, and 155–175; these read MIAI…TTIS, ATGP…FFLL, FAGW…LTAV, WLPG…LTLL, and TEFW…VTGI.

The protein belongs to the amino acid-polyamine-organocation (APC) superfamily.

It is found in the cell membrane. This is an uncharacterized protein from Lactobacillus delbrueckii subsp. lactis.